The sequence spans 611 residues: Angiotensin-converting enzyme (611 aa).

Positions 1 to 17 (MKLLVVTILAGLAVCHG) are cleaved as a signal peptide. The Peptidase M2 domain occupies 19–607 (TKEEIVATEY…VESLCHQRYK (589 aa)). Asparagine 53 is a glycosylation site (N-linked (GlcNAc...) asparagine). Cysteine 133 and cysteine 141 are oxidised to a cystine. A glycan (N-linked (GlcNAc...) asparagine) is linked at asparagine 196. Cysteines 336 and 354 form a disulfide. Histidine 367 lines the Zn(2+) pocket. The Proton acceptor role is filled by glutamate 368. Residues histidine 371 and glutamate 395 each contribute to the Zn(2+) site. Histidine 497 serves as the catalytic Proton donor. Cysteines 522 and 540 form a disulfide. Asparagine 531 carries N-linked (GlcNAc...) asparagine glycosylation.

Belongs to the peptidase M2 family. Zn(2+) serves as cofactor. As to expression, expressed in the compound ganglion and in the posterior region of the midgut.

The protein resides in the secreted. Its subcellular location is the extracellular space. The catalysed reaction is Release of a C-terminal dipeptide, oligopeptide-|-Xaa-Yaa, when Xaa is not Pro, and Yaa is neither Asp nor Glu. Thus, conversion of angiotensin I to angiotensin II, with increase in vasoconstrictor activity, but no action on angiotensin II.. Functionally, involved in the specific maturation or degradation of a number of bioactive peptides. The sequence is that of Angiotensin-converting enzyme (ACE) from Haematobia irritans exigua (Buffalo fly).